We begin with the raw amino-acid sequence, 81 residues long: Carboxysome shell vertex protein CsoS4B (81 aa).

The 77-residue stretch at 1–77 (MEVMRVRSDL…TDLTIGGIID (77 aa)) folds into the BMV domain.

Belongs to the CcmL/EutN family. CsoS4 subfamily. Homopentamer.

It localises to the carboxysome. Its function is as follows. Probably forms vertices in the carboxysome. Has been modeled to induce curvature upon insertion into an otherwise flat hexagonal layer of major carboxysome subunits. A minor shell protein, only 12 pentamers of CsoS4A/CsoS4B are calculated to be present in each carboxysome. The 2 CsoS4 proteins contribute to the impermeability of the carboxysome to CO(2). Its central pore is probably too small to allow passage of metabolites; its function might be to anchor different proteins or metabolites to the carboxysome. In terms of biological role, unlike beta-carboxysomes, alpha-carboxysomes (Cb) can form without cargo protein. CsoS2 is essential for Cb formation and is also capable of targeting foreign proteins to the Cb. The Cb shell assembles with the aid of CsoS2; CsoS1A, CsoS1B and CsoS1C form the majority of the shell while CsoS4A and CsoS4B form vertices. CsoS1D forms pseudohexamers that probably control metabolite flux into and out of the shell. The chain is Carboxysome shell vertex protein CsoS4B from Halothiobacillus neapolitanus (strain ATCC 23641 / c2) (Thiobacillus neapolitanus).